The sequence spans 1275 residues: Surfactin synthase subunit 3 (1275 aa).

One can recognise a Carrier domain in the interval G968–G1043. S1003 carries the post-translational modification O-(pantetheine 4'-phosphoryl)serine. Positions Q1059–T1271 are thioesterase. Active-site residues include S1120, D1147, and H1247.

The protein belongs to the ATP-dependent AMP-binding enzyme family. Pantetheine 4'-phosphate serves as cofactor.

Its pathway is antibiotic biosynthesis; surfactin biosynthesis. Probably activates a leucine. This Bacillus subtilis (strain 168) protein is Surfactin synthase subunit 3 (srfAC).